Here is a 557-residue protein sequence, read N- to C-terminus: Carbamoyl phosphate synthase large chain, N-terminal section (557 aa).

Residues 1 to 402 (MPKRTDIKKI…ALLKAVRSLE (402 aa)) are carboxyphosphate synthetic domain. Arg-129, Arg-169, Gly-175, Gly-176, Lys-208, Leu-210, Glu-215, Gly-241, Val-242, His-243, Gln-285, and Glu-299 together coordinate ATP. One can recognise an ATP-grasp domain in the interval 133–328 (KETMESIGLK…IAKVAAKLAV (196 aa)). Mg(2+) contacts are provided by Gln-285, Glu-299, and Asn-301. Gln-285, Glu-299, and Asn-301 together coordinate Mn(2+). The interval 403 to 553 (LDRYGLAFPK…PYYTVDGQEI (151 aa)) is oligomerization domain.

Belongs to the CarB family. In terms of assembly, composed of two chains; the small (or glutamine) chain promotes the hydrolysis of glutamine to ammonia, which is used by the large (or ammonia) chain to synthesize carbamoyl phosphate. Tetramer of heterodimers (alpha,beta)4. Mg(2+) is required as a cofactor. Mn(2+) serves as cofactor.

It catalyses the reaction hydrogencarbonate + L-glutamine + 2 ATP + H2O = carbamoyl phosphate + L-glutamate + 2 ADP + phosphate + 2 H(+). The catalysed reaction is hydrogencarbonate + NH4(+) + 2 ATP = carbamoyl phosphate + 2 ADP + phosphate + 2 H(+). Its pathway is amino-acid biosynthesis; L-arginine biosynthesis; carbamoyl phosphate from bicarbonate: step 1/1. It functions in the pathway pyrimidine metabolism; UMP biosynthesis via de novo pathway; (S)-dihydroorotate from bicarbonate: step 1/3. Functionally, large subunit of the glutamine-dependent carbamoyl phosphate synthetase (CPSase). CPSase catalyzes the formation of carbamoyl phosphate from the ammonia moiety of glutamine, carbonate, and phosphate donated by ATP, constituting the first step of 2 biosynthetic pathways, one leading to arginine and/or urea and the other to pyrimidine nucleotides. The large subunit (synthetase) binds the substrates ammonia (free or transferred from glutamine from the small subunit), hydrogencarbonate and ATP and carries out an ATP-coupled ligase reaction, activating hydrogencarbonate by forming carboxy phosphate which reacts with ammonia to form carbamoyl phosphate. The polypeptide is Carbamoyl phosphate synthase large chain, N-terminal section (carB1) (Aquifex aeolicus (strain VF5)).